Reading from the N-terminus, the 128-residue chain is Large ribosomal subunit protein eL8 (128 aa).

The protein belongs to the eukaryotic ribosomal protein eL8 family. As to quaternary structure, part of the 50S ribosomal subunit. Probably part of the RNase P complex.

The protein resides in the cytoplasm. Multifunctional RNA-binding protein that recognizes the K-turn motif in ribosomal RNA, the RNA component of RNase P, box H/ACA, box C/D and box C'/D' sRNAs. This chain is Large ribosomal subunit protein eL8, found in Ignicoccus hospitalis (strain KIN4/I / DSM 18386 / JCM 14125).